The chain runs to 248 residues: Transcription factor Spi-C (248 aa).

The segment at residues 111-194 (LRLFEYLHES…IRRKLTYQFS (84 aa)) is a DNA-binding region (ETS).

The protein belongs to the ETS family. In terms of assembly, binds DNA as a monomer.

The protein resides in the nucleus. Its function is as follows. Controls the development of red pulp macrophages required for red blood cells recycling and iron homeostasis. Transcription factor that binds to the PU-box, a purine-rich DNA sequence (5'-GAGGA[AT]-3') that can act as a lymphoid-specific enhancer. Regulates VCAM1 gene expression. This Bos taurus (Bovine) protein is Transcription factor Spi-C (SPIC).